Consider the following 193-residue polypeptide: Imidazoleglycerol-phosphate dehydratase (193 aa).

This sequence belongs to the imidazoleglycerol-phosphate dehydratase family.

It is found in the cytoplasm. It catalyses the reaction D-erythro-1-(imidazol-4-yl)glycerol 3-phosphate = 3-(imidazol-4-yl)-2-oxopropyl phosphate + H2O. It participates in amino-acid biosynthesis; L-histidine biosynthesis; L-histidine from 5-phospho-alpha-D-ribose 1-diphosphate: step 6/9. The polypeptide is Imidazoleglycerol-phosphate dehydratase (hisB) (Saccharolobus solfataricus (strain ATCC 35092 / DSM 1617 / JCM 11322 / P2) (Sulfolobus solfataricus)).